The primary structure comprises 316 residues: tRNA-dihydrouridine(16) synthase (316 aa).

FMN is bound by residues 7 to 9 (PME) and Gln68. The active-site Proton donor is the Cys98. Residues Lys139, 200 to 202 (NGE), and 224 to 225 (GR) each bind FMN.

This sequence belongs to the Dus family. DusC subfamily. Requires FMN as cofactor.

It catalyses the reaction 5,6-dihydrouridine(16) in tRNA + NADP(+) = uridine(16) in tRNA + NADPH + H(+). The catalysed reaction is 5,6-dihydrouridine(16) in tRNA + NAD(+) = uridine(16) in tRNA + NADH + H(+). Its function is as follows. Catalyzes the synthesis of 5,6-dihydrouridine (D), a modified base found in the D-loop of most tRNAs, via the reduction of the C5-C6 double bond in target uridines. Specifically modifies U16 in tRNAs. This Escherichia coli O157:H7 protein is tRNA-dihydrouridine(16) synthase.